The chain runs to 164 residues: Phosphopantetheine adenylyltransferase (164 aa).

S9 contributes to the substrate binding site. Residues 9-10 (SF) and H17 each bind ATP. Residues K41, V78, and R92 each coordinate substrate. Residues 93-95 (GLR), E103, and 128-134 (VRTITAT) contribute to the ATP site.

This sequence belongs to the bacterial CoaD family. As to quaternary structure, homohexamer. It depends on Mg(2+) as a cofactor.

The protein resides in the cytoplasm. It catalyses the reaction (R)-4'-phosphopantetheine + ATP + H(+) = 3'-dephospho-CoA + diphosphate. It participates in cofactor biosynthesis; coenzyme A biosynthesis; CoA from (R)-pantothenate: step 4/5. Its function is as follows. Reversibly transfers an adenylyl group from ATP to 4'-phosphopantetheine, yielding dephospho-CoA (dPCoA) and pyrophosphate. This is Phosphopantetheine adenylyltransferase from Brucella suis (strain ATCC 23445 / NCTC 10510).